A 184-amino-acid polypeptide reads, in one-letter code: Ribosome-recycling factor (184 aa).

It belongs to the RRF family.

Its subcellular location is the cytoplasm. Responsible for the release of ribosomes from messenger RNA at the termination of protein biosynthesis. May increase the efficiency of translation by recycling ribosomes from one round of translation to another. The sequence is that of Ribosome-recycling factor from Borrelia hermsii (strain HS1 / DAH).